The primary structure comprises 363 residues: Type-1 angiotensin II receptor B (363 aa).

Topologically, residues 1–27 (MLSNISAGENSEVEKIVVKCSKSGMHN) are extracellular. An N-linked (GlcNAc...) asparagine glycan is attached at Asn-4. 2 disulfides stabilise this stretch: Cys-20-Cys-274 and Cys-103-Cys-182. The chain crosses the membrane as a helical span at residues 28–57 (YIFITIPIIYSTIFVVGVFGNSLVVIVIYS). The Cytoplasmic segment spans residues 58 to 63 (YMKMKT). The helical transmembrane segment at 64–91 (MASVFLMNLALSDLCFVITLPLWAVYTA) threads the bilayer. At 92 to 100 (MHYHWPFGD) the chain is on the extracellular side. The helical transmembrane segment at 101–127 (LLCKIASTAITLNLYTTVFLLTCLSID) threads the bilayer. Residues 128–143 (RYSAIVHPMKSRIRRT) lie on the Cytoplasmic side of the membrane. A helical transmembrane segment spans residues 144–167 (VMVARLTCVGIWLVAFLASLPSVI). Residues 168–192 (YRQIFIFPDTNQTVCALVYHSGHIY) are Extracellular-facing. Arg-169 is an angiotensin II binding site. N-linked (GlcNAc...) asparagine glycosylation is present at Asn-178. Angiotensin II is bound by residues Tyr-186 and Lys-201. Residues 193-218 (FMVGMSLVKNIVGFFIPFVIILTSYT) traverse the membrane as a helical segment. Residues 219–239 (LIGKTLKEVYRAQRARNDDIF) are Cytoplasmic-facing. A helical membrane pass occupies residues 240-268 (KMIVAVVLLFFFCWIPHQVFTFLDVLIQM). At 269–278 (DVIQNCKMYD) the chain is on the extracellular side. Residues 279–304 (IVDTGMPITICIAYFNSCLNPFLYGF) form a helical membrane-spanning segment. The Cytoplasmic segment spans residues 305-363 (FGKKFRKHFLQLIKYIPPKMRTHASVNTKSSTVSQRLSDTKCASNKIALWIFDIEEHCK). Residues Cys-346 and Cys-362 are each lipidated (S-palmitoyl cysteine).

It belongs to the G-protein coupled receptor 1 family. C-terminal Ser or Thr residues may be phosphorylated. As to expression, heart membranes, follicular oocytes.

It is found in the cell membrane. Functionally, receptor for angiotensin II, a vasoconstricting peptide, which acts as a key regulator of blood pressure and sodium retention by the kidney. The activated receptor in turn couples to G-alpha proteins G(q) (GNAQ, GNA11, GNA14 or GNA15) and thus activates phospholipase C and increases the cytosolic Ca(2+) concentrations, which in turn triggers cellular responses such as stimulation of protein kinase C. The chain is Type-1 angiotensin II receptor B (agtr1-b) from Xenopus laevis (African clawed frog).